The following is a 689-amino-acid chain: DNA topoisomerase 1 (689 aa).

Residues 3-113 form the Toprim domain; sequence DNLVIVESPA…KENRVVFNEI (111 aa). Glutamate 9 and aspartate 82 together coordinate Mg(2+). One can recognise a Topo IA-type catalytic domain in the interval 129–557; that stretch reads EMNLVDAQQA…FFSSFKQDVE (429 aa). Residues 163-168 are interaction with DNA; the sequence is SAGRVQ. The O-(5'-phospho-DNA)-tyrosine intermediate role is filled by tyrosine 298. The tract at residues 328–356 is disordered; that stretch reads SKRKASGKQGDQDAHEAIRPSSTMRTPDD. C4-type zinc fingers lie at residues 577–603, 617–645, and 658–681; these read CEIC…FPDC, CPKC…YPEC, and CPKC…CSNC.

It belongs to the type IA topoisomerase family. As to quaternary structure, monomer. It depends on Mg(2+) as a cofactor.

The enzyme catalyses ATP-independent breakage of single-stranded DNA, followed by passage and rejoining.. In terms of biological role, releases the supercoiling and torsional tension of DNA, which is introduced during the DNA replication and transcription, by transiently cleaving and rejoining one strand of the DNA duplex. Introduces a single-strand break via transesterification at a target site in duplex DNA. The scissile phosphodiester is attacked by the catalytic tyrosine of the enzyme, resulting in the formation of a DNA-(5'-phosphotyrosyl)-enzyme intermediate and the expulsion of a 3'-OH DNA strand. The free DNA strand then undergoes passage around the unbroken strand, thus removing DNA supercoils. Finally, in the religation step, the DNA 3'-OH attacks the covalent intermediate to expel the active-site tyrosine and restore the DNA phosphodiester backbone. The protein is DNA topoisomerase 1 of Staphylococcus aureus (strain USA300).